Here is a 692-residue protein sequence, read N- to C-terminus: Aspartate--tRNA ligase, mitochondrial (692 aa).

The transit peptide at 1–61 (MNRVILKDSK…RNFTNTINNN (61 aa)) directs the protein to the mitochondrion. Glu-264 serves as a coordination point for L-aspartate. The interval 287 to 290 (QQYK) is aspartate. Position 309 (Arg-309) interacts with L-aspartate. ATP-binding positions include 309–311 (RDE) and Glu-590. Arg-597 is an L-aspartate binding site. Residue 642–645 (GFDR) participates in ATP binding.

Belongs to the class-II aminoacyl-tRNA synthetase family. Type 1 subfamily.

The protein resides in the mitochondrion matrix. It carries out the reaction tRNA(Asp) + L-aspartate + ATP = L-aspartyl-tRNA(Asp) + AMP + diphosphate. The sequence is that of Aspartate--tRNA ligase, mitochondrial (maspS) from Dictyostelium discoideum (Social amoeba).